The following is a 124-amino-acid chain: Competence protein ComGG (124 aa).

A signal peptide spans 1–28; sequence MYRTRGFIYPAVLFVSALVLLIVNFVAA.

The transformation pili are flexible filaments, consisting mainly of the major pilin ComGC and smaller amounts of the minor pilins, including at least ComGD, ComGF and ComGG. Interacts with ComGC; the interaction is probably direct. Interacts with ComGD. Interacts with ComGF. May act as a link between ComGC, ComGD and ComGF. Homodimer; disulfide-linked. A minor fraction of ComGG is found as a disulfide-bonded homodimer. Partial processing of ComGG in competent cells requires ComC.

The protein localises to the cell membrane. It localises to the secreted. Its function is as follows. Required for formation of the type IV-like pilus (T4P) that plays a role in transformation. Transformation pili are dynamically extended and retracted, perhaps thereby promoting DNA uptake and transformation. Required for transformation and DNA binding. The sequence is that of Competence protein ComGG (comGG) from Bacillus subtilis (strain 168).